The primary structure comprises 360 residues: Photosystem II protein D1 (360 aa).

A run of 3 helical transmembrane segments spans residues 30 to 47 (YVGW…AAAA), 119 to 134 (HFLI…QWEL), and 143 to 157 (WICV…AAFA). H119 is a binding site for chlorophyll a. A pheophytin a-binding site is contributed by Y127. D171 and E190 together coordinate [CaMn4O5] cluster. Residues 198 to 219 (FHMAGVAGMFGGSLFSAMHGSL) form a helical membrane-spanning segment. Chlorophyll a is bound at residue H199. A quinone is bound by residues H216 and 265 to 266 (SF). H216 contributes to the Fe cation binding site. A Fe cation-binding site is contributed by H273. A helical membrane pass occupies residues 275–289 (FLAVFPVVCVWLTSM). [CaMn4O5] cluster contacts are provided by H333, E334, D343, and A345. Positions 346–360 (AAESTTVALTAPAIG) are excised as a propeptide.

It belongs to the reaction center PufL/M/PsbA/D family. PSII is composed of 1 copy each of membrane proteins PsbA, PsbB, PsbC, PsbD, PsbE, PsbF, PsbH, PsbI, PsbJ, PsbK, PsbL, PsbM, PsbT, PsbX, PsbY, Psb30/Ycf12, peripheral proteins PsbO, CyanoQ (PsbQ), PsbU, PsbV and a large number of cofactors. It forms dimeric complexes. The D1/D2 heterodimer binds P680, chlorophylls that are the primary electron donor of PSII, and subsequent electron acceptors. It shares a non-heme iron and each subunit binds pheophytin, quinone, additional chlorophylls, carotenoids and lipids. D1 provides most of the ligands for the Mn4-Ca-O5 cluster of the oxygen-evolving complex (OEC). There is also a Cl(-1) ion associated with D1 and D2, which is required for oxygen evolution. The PSII complex binds additional chlorophylls, carotenoids and specific lipids. is required as a cofactor. Post-translationally, tyr-162 forms a radical intermediate that is referred to as redox-active TyrZ, YZ or Y-Z. C-terminally processed by CtpA; processing is essential to allow assembly of the oxygen-evolving complex and thus photosynthetic growth.

Its subcellular location is the cellular thylakoid membrane. The catalysed reaction is 2 a plastoquinone + 4 hnu + 2 H2O = 2 a plastoquinol + O2. Functionally, photosystem II (PSII) is a light-driven water:plastoquinone oxidoreductase that uses light energy to abstract electrons from H(2)O, generating O(2) and a proton gradient subsequently used for ATP formation. It consists of a core antenna complex that captures photons, and an electron transfer chain that converts photonic excitation into a charge separation. The D1/D2 (PsbA/PsbD) reaction center heterodimer binds P680, the primary electron donor of PSII as well as several subsequent electron acceptors. The protein is Photosystem II protein D1 of Prochlorococcus marinus (strain MIT 9515).